Here is a 188-residue protein sequence, read N- to C-terminus: Putative manganese efflux pump MntP (188 aa).

The next 6 membrane-spanning stretches (helical) occupy residues 3–23, 41–61, 62–82, 107–129, 143–163, and 168–188; these read LSAT…ASIG, LIFG…GMLA, SQFI…FLGG, LLVT…LAFL, ATFI…PLLG, and ILGG…HFAG.

This sequence belongs to the MntP (TC 9.B.29) family.

The protein resides in the cell inner membrane. Probably functions as a manganese efflux pump. In Klebsiella pneumoniae subsp. pneumoniae (strain ATCC 700721 / MGH 78578), this protein is Putative manganese efflux pump MntP.